The primary structure comprises 269 residues: GTP cyclohydrolase FolE2 (269 aa).

This sequence belongs to the GTP cyclohydrolase IV family.

It catalyses the reaction GTP + H2O = 7,8-dihydroneopterin 3'-triphosphate + formate + H(+). The protein operates within cofactor biosynthesis; 7,8-dihydroneopterin triphosphate biosynthesis; 7,8-dihydroneopterin triphosphate from GTP: step 1/1. Functionally, converts GTP to 7,8-dihydroneopterin triphosphate. This chain is GTP cyclohydrolase FolE2, found in Burkholderia vietnamiensis (strain G4 / LMG 22486) (Burkholderia cepacia (strain R1808)).